The primary structure comprises 287 residues: Ribosomal RNA small subunit methyltransferase I (287 aa).

This sequence belongs to the methyltransferase superfamily. RsmI family.

The protein resides in the cytoplasm. The catalysed reaction is cytidine(1402) in 16S rRNA + S-adenosyl-L-methionine = 2'-O-methylcytidine(1402) in 16S rRNA + S-adenosyl-L-homocysteine + H(+). Functionally, catalyzes the 2'-O-methylation of the ribose of cytidine 1402 (C1402) in 16S rRNA. The chain is Ribosomal RNA small subunit methyltransferase I from Streptococcus pyogenes serotype M3 (strain ATCC BAA-595 / MGAS315).